The primary structure comprises 201 residues: Recombination protein RecR (201 aa).

The segment at 60–75 (CKSCGNIDTRNPCTVC) adopts a C4-type zinc-finger fold. The Toprim domain maps to 83-178 (SIIVVVADVA…KVTRLAHGVP (96 aa)).

The protein belongs to the RecR family.

In terms of biological role, may play a role in DNA repair. It seems to be involved in an RecBC-independent recombinational process of DNA repair. It may act with RecF and RecO. The chain is Recombination protein RecR from Rhodopseudomonas palustris (strain BisB5).